We begin with the raw amino-acid sequence, 459 residues long: Zinc finger protein ZFP2 (459 aa).

13 consecutive C2H2-type zinc fingers follow at residues 100 to 122, 128 to 150, 156 to 178, 184 to 206, 212 to 234, 240 to 262, 268 to 290, 296 to 318, 324 to 346, 352 to 374, 380 to 402, 408 to 430, and 436 to 458; these read YGCDECGKTFRQSSSLLKHQRIH, YTCNVCDKHFIERSSLTVHQRTH, YKCHECGKAFSQSMNLTVHQRTH, YQCKECGKAFRKNSSLIQHERIH, YKCHDCGKAFTQSMNLTVHQRTH, YECNQCGKAFSQSMHLIVHQRSH, YECSECGKAFSKSSTLTLHQRNH, YKCNKCGKSFSQSTYLIEHQRLH, FECNQCGKAFSKNSSLTQHRRIH, YECMICGKHFTGRSSLTVHQVIH, YECTECGKAFSQSAYLIEHQRIH, YECDQCGKAFIKNSSLIVHQRIH, and YQCNECGKSFSRSTNLTRHQRTH.

Belongs to the krueppel C2H2-type zinc-finger protein family.

The protein resides in the nucleus. Probable transcription factor involved in neuronal differentiation and/or phenotypic maintenance. This is Zinc finger protein ZFP2 (Zfp2) from Mus musculus (Mouse).